A 142-amino-acid chain; its full sequence is Large ribosomal subunit protein bL27m (142 aa).

The tract at residues 27-48 (TKKSAGSTKNGRTSQPKNLGLK) is disordered. The segment covering 30–43 (SAGSTKNGRTSQPK) has biased composition (polar residues).

Belongs to the bacterial ribosomal protein bL27 family.

It is found in the mitochondrion. This chain is Large ribosomal subunit protein bL27m (mrpl27), found in Dictyostelium discoideum (Social amoeba).